Consider the following 528-residue polypeptide: MAGSQLNVLVKLDQAKTQWYHFMAIVIAGMGFFTDAYDLFCIALVTKLLGRLYYTDITKPNPGTLPPNVSSAVTGVALCGTLAGQLFFGWLGDKLGRKSVYGFTLILMVVCSIASGLSFGHTPKSVIATLCFFRFWLGFGIGGDYPLSATIMSEYASKKTRGAFIAAVFAMQGFGILFGAIVALVVSAGFRHAYPAPSYAQNPAASLAPQADYTWRLILMFGTIPAGLTYYWRMKMPETARYTALVARNAKQAAADMSKVLHAEIEERPEVVESQVVAGETWGLFSRQFMKRHGMHLLATTSTWFLLDIAFYSQNLFQKDIFSKVGWIPPAKTMNALEELYRISRAQALIALCGTIPGYWFTVAFIDIVGRFWIQIMGFFMMTVFMLALGVPYDHWTHPAHHTGFVVLYALTFFFANFGPNSTTFIVPAEIFPARLRSTCHGISAASGKAGAIIGAFGFLYAAQDQHNPDAGYSRGIGIRNALFVLAGTNFLGMLMTLLVPESKGLSLEEMSKDNVVDETAQEAIAQA.

The Cytoplasmic portion of the chain corresponds to 1 to 24 (MAGSQLNVLVKLDQAKTQWYHFMA). The chain crosses the membrane as a helical span at residues 25–45 (IVIAGMGFFTDAYDLFCIALV). Residues 46 to 71 (TKLLGRLYYTDITKPNPGTLPPNVSS) lie on the Extracellular side of the membrane. A helical transmembrane segment spans residues 72 to 92 (AVTGVALCGTLAGQLFFGWLG). At 93–99 (DKLGRKS) the chain is on the cytoplasmic side. The helical transmembrane segment at 100–120 (VYGFTLILMVVCSIASGLSFG) threads the bilayer. The Extracellular segment spans residues 121–125 (HTPKS). Residues 126-146 (VIATLCFFRFWLGFGIGGDYP) form a helical membrane-spanning segment. The Cytoplasmic segment spans residues 147–163 (LSATIMSEYASKKTRGA). A helical membrane pass occupies residues 164-184 (FIAAVFAMQGFGILFGAIVAL). Residues 185 to 212 (VVSAGFRHAYPAPSYAQNPAASLAPQAD) lie on the Extracellular side of the membrane. Residues 213-232 (YTWRLILMFGTIPAGLTYYW) form a helical membrane-spanning segment. Topologically, residues 233 to 296 (RMKMPETARY…RQFMKRHGMH (64 aa)) are cytoplasmic. The helical transmembrane segment at 297-317 (LLATTSTWFLLDIAFYSQNLF) threads the bilayer. Over 318–348 (QKDIFSKVGWIPPAKTMNALEELYRISRAQA) the chain is Extracellular. The helical transmembrane segment at 349–369 (LIALCGTIPGYWFTVAFIDIV) threads the bilayer. The Cytoplasmic portion of the chain corresponds to 370-371 (GR). Residues 372–392 (FWIQIMGFFMMTVFMLALGVP) form a helical membrane-spanning segment. Residues 393-405 (YDHWTHPAHHTGF) lie on the Extracellular side of the membrane. Residues 406–426 (VVLYALTFFFANFGPNSTTFI) traverse the membrane as a helical segment. Residues 427–442 (VPAEIFPARLRSTCHG) are Cytoplasmic-facing. The helical transmembrane segment at 443 to 463 (ISAASGKAGAIIGAFGFLYAA) threads the bilayer. Residues 464–481 (QDQHNPDAGYSRGIGIRN) lie on the Extracellular side of the membrane. The helical transmembrane segment at 482 to 502 (ALFVLAGTNFLGMLMTLLVPE) threads the bilayer. Topologically, residues 503–528 (SKGLSLEEMSKDNVVDETAQEAIAQA) are cytoplasmic.

It belongs to the major facilitator superfamily. Phosphate:H(+) symporter (TC 2.A.1.9) family. Expressed in the root stele and leaf phloem and xylem.

Its subcellular location is the membrane. In terms of biological role, low-affinity transporter for inorganic phosphate (Pi). Involved in internal Pi transport from root to shoot. Responsible for most of the PHR2-mediated accumulation of excess shoot Pi under abundant Pi conditions, but not for PHO2-mediated accumulation of excess shoot Pi. Acts as a H(+):phosphate symporter. The protein is Inorganic phosphate transporter 1-2 (PTH1-2) of Oryza sativa subsp. japonica (Rice).